Consider the following 865-residue polypeptide: LINE-1 type transposase domain-containing protein 1 (865 aa).

Serine 2 carries the N-acetylserine modification. Serine 2 carries the phosphoserine modification. Phosphothreonine is present on threonine 149. The residue at position 154 (serine 154) is a Phosphoserine. Residues 370–508 (EMKNLETQEE…EKKASRRQKE (139 aa)) form a disordered region. 2 stretches are compositionally biased toward acidic residues: residues 376–440 (TQEE…EQTS) and 472–483 (SVEDSESEEEEE). Phosphoserine is present on residues serine 472, serine 476, and serine 478. The span at 498–508 (TEKKASRRQKE) shows a compositional bias: basic and acidic residues. 3 positions are modified to phosphoserine: serine 518, serine 561, and serine 573. Positions 590–608 (EEKKHRTLHTEELTSKEAD) are enriched in basic and acidic residues. The disordered stretch occupies residues 590–612 (EEKKHRTLHTEELTSKEADLTEE). Serine 640, serine 648, and serine 665 each carry phosphoserine. Positions 642–684 (VLEIENSVDDLSSRMDILEERIDSLEDQIEEFSKDTMQMTKQI) form a coiled coil.

This sequence belongs to the transposase 22 family.

This Homo sapiens (Human) protein is LINE-1 type transposase domain-containing protein 1 (L1TD1).